Here is a 214-residue protein sequence, read N- to C-terminus: uncharacterized protein (214 aa).

Belongs to the uracil-DNA glycosylase (UDG) superfamily.

This is an uncharacterized protein from Haemophilus influenzae (strain ATCC 51907 / DSM 11121 / KW20 / Rd).